The following is a 491-amino-acid chain: Aspartyl/glutamyl-tRNA(Asn/Gln) amidotransferase subunit B (491 aa).

Belongs to the GatB/GatE family. GatB subfamily. As to quaternary structure, heterotrimer of A, B and C subunits.

The enzyme catalyses L-glutamyl-tRNA(Gln) + L-glutamine + ATP + H2O = L-glutaminyl-tRNA(Gln) + L-glutamate + ADP + phosphate + H(+). The catalysed reaction is L-aspartyl-tRNA(Asn) + L-glutamine + ATP + H2O = L-asparaginyl-tRNA(Asn) + L-glutamate + ADP + phosphate + 2 H(+). Its function is as follows. Allows the formation of correctly charged Asn-tRNA(Asn) or Gln-tRNA(Gln) through the transamidation of misacylated Asp-tRNA(Asn) or Glu-tRNA(Gln) in organisms which lack either or both of asparaginyl-tRNA or glutaminyl-tRNA synthetases. The reaction takes place in the presence of glutamine and ATP through an activated phospho-Asp-tRNA(Asn) or phospho-Glu-tRNA(Gln). In Burkholderia cenocepacia (strain HI2424), this protein is Aspartyl/glutamyl-tRNA(Asn/Gln) amidotransferase subunit B.